A 165-amino-acid polypeptide reads, in one-letter code: Phosphopantetheine adenylyltransferase (165 aa).

Thr10 is a substrate binding site. Residues 10 to 11 (TF) and His18 each bind ATP. Positions 42, 75, and 89 each coordinate substrate. ATP-binding positions include 90–92 (GVR), Glu100, and 125–131 (VSFISSS).

Belongs to the bacterial CoaD family. In terms of assembly, homohexamer. Mg(2+) serves as cofactor.

It is found in the cytoplasm. It catalyses the reaction (R)-4'-phosphopantetheine + ATP + H(+) = 3'-dephospho-CoA + diphosphate. Its pathway is cofactor biosynthesis; coenzyme A biosynthesis; CoA from (R)-pantothenate: step 4/5. In terms of biological role, reversibly transfers an adenylyl group from ATP to 4'-phosphopantetheine, yielding dephospho-CoA (dPCoA) and pyrophosphate. In Buchnera aphidicola subsp. Acyrthosiphon pisum (strain 5A), this protein is Phosphopantetheine adenylyltransferase.